The chain runs to 504 residues: Maturase K (504 aa).

The protein belongs to the intron maturase 2 family. MatK subfamily.

Its subcellular location is the plastid. It is found in the chloroplast. In terms of biological role, usually encoded in the trnK tRNA gene intron. Probably assists in splicing its own and other chloroplast group II introns. This chain is Maturase K, found in Alliaria petiolata (Garlic mustard).